Consider the following 62-residue polypeptide: Large ribosomal subunit protein uL29 (62 aa).

It belongs to the universal ribosomal protein uL29 family.

The sequence is that of Large ribosomal subunit protein uL29 from Trichlorobacter lovleyi (strain ATCC BAA-1151 / DSM 17278 / SZ) (Geobacter lovleyi).